The primary structure comprises 440 residues: C4-dicarboxylate transport protein (440 aa).

The next 8 helical transmembrane spans lie at 8–28 (LYLQVLLAVVLGALVGHLFPA), 40–60 (FIKLVKMLIAPIVFATVVTGI), 74–94 (LKGLLYFEVLTTVALAIGLVV), 147–167 (GDILQVLLFSVLFGAALAALK), 187–207 (IVGFVMRLAPVGAFGAMAFTV), 221–241 (LIACFYATSALFVVLMLGLVL), 288–308 (VVGLVVPMGYSFNLDGTSIYL), and 354–374 (AATLSAVGNIPVAGLALLLGV). The tract at residues 419 to 440 (EEVEPANEPEPPAVPAGAGLHG) is disordered.

The protein belongs to the dicarboxylate/amino acid:cation symporter (DAACS) (TC 2.A.23) family.

Its subcellular location is the cell inner membrane. Its function is as follows. Responsible for the transport of dicarboxylates such as succinate, fumarate, and malate from the periplasm across the membrane. The chain is C4-dicarboxylate transport protein from Anaeromyxobacter dehalogenans (strain 2CP-1 / ATCC BAA-258).